We begin with the raw amino-acid sequence, 265 residues long: Phosphonates import ATP-binding protein PhnC 1 (265 aa).

One can recognise an ABC transporter domain in the interval 3 to 247; sequence LRLSGIELRH…HLDTLYANEQ (245 aa). 36-43 contributes to the ATP binding site; it reads GPSGAGKT. Positions 245-265 are disordered; the sequence is NEQLSPQPAPDVSETPWTPRC.

The protein belongs to the ABC transporter superfamily. Phosphonates importer (TC 3.A.1.9.1) family. As to quaternary structure, the complex is composed of two ATP-binding proteins (PhnC), two transmembrane proteins (PhnE) and a solute-binding protein (PhnD).

Its subcellular location is the cell inner membrane. The enzyme catalyses phosphonate(out) + ATP + H2O = phosphonate(in) + ADP + phosphate + H(+). Its function is as follows. Part of the ABC transporter complex PhnCDE involved in phosphonates import. Responsible for energy coupling to the transport system. This is Phosphonates import ATP-binding protein PhnC 1 from Pseudomonas savastanoi pv. phaseolicola (strain 1448A / Race 6) (Pseudomonas syringae pv. phaseolicola (strain 1448A / Race 6)).